A 558-amino-acid polypeptide reads, in one-letter code: CTP synthase (558 aa).

Positions 1-267 are amidoligase domain; the sequence is MTKFVFVTGG…AQQTLELLNL (267 aa). Residue Ser-13 coordinates CTP. Ser-13 lines the UTP pocket. Residues 14–19 and Asp-71 each bind ATP; that span reads SIGKGI. Mg(2+) is bound by residues Asp-71 and Glu-141. CTP is bound by residues 148–150, 188–193, and Lys-224; these read DIE and KTKPTQ. UTP is bound by residues 188 to 193 and Lys-224; that span reads KTKPTQ. The Glutamine amidotransferase type-1 domain occupies 292–534; that stretch reads EVALVGKYVQ…VKASVDYNHV (243 aa). Gly-354 contacts L-glutamine. Cys-381 acts as the Nucleophile; for glutamine hydrolysis in catalysis. L-glutamine contacts are provided by residues 382–385, Glu-405, and Arg-462; that span reads MGMQ. Residues His-507 and Glu-509 contribute to the active site.

The protein belongs to the CTP synthase family. Homotetramer.

The catalysed reaction is UTP + L-glutamine + ATP + H2O = CTP + L-glutamate + ADP + phosphate + 2 H(+). The enzyme catalyses L-glutamine + H2O = L-glutamate + NH4(+). It carries out the reaction UTP + NH4(+) + ATP = CTP + ADP + phosphate + 2 H(+). It participates in pyrimidine metabolism; CTP biosynthesis via de novo pathway; CTP from UDP: step 2/2. With respect to regulation, allosterically activated by GTP, when glutamine is the substrate; GTP has no effect on the reaction when ammonia is the substrate. The allosteric effector GTP functions by stabilizing the protein conformation that binds the tetrahedral intermediate(s) formed during glutamine hydrolysis. Inhibited by the product CTP, via allosteric rather than competitive inhibition. Catalyzes the ATP-dependent amination of UTP to CTP with either L-glutamine or ammonia as the source of nitrogen. Regulates intracellular CTP levels through interactions with the four ribonucleotide triphosphates. The chain is CTP synthase from Gloeothece citriformis (strain PCC 7424) (Cyanothece sp. (strain PCC 7424)).